Reading from the N-terminus, the 188-residue chain is Cytochrome b-245 chaperone 1 homolog (188 aa).

Residues 20 to 42 form a helical membrane-spanning segment; it reads SIRSWSLLVGISSVGLAAAYYST.

The protein belongs to the CYBC1 family.

The protein localises to the endoplasmic reticulum membrane. In terms of biological role, functions as a chaperone necessary for a stable expression of the CYBA and CYBB subunits of the cytochrome b-245 heterodimer. This is Cytochrome b-245 chaperone 1 homolog (cybc1) from Xenopus tropicalis (Western clawed frog).